Here is a 351-residue protein sequence, read N- to C-terminus: Protein-glutamate methylesterase/protein-glutamine glutaminase (351 aa).

The region spanning 3-120 is the Response regulatory domain; sequence KTLVVDDSAL…EISKIENELV (118 aa). Asp-54 carries the 4-aspartylphosphate modification. Positions 160–347 constitute a CheB-type methylesterase domain; sequence ILIGSSTGGP…EQIVRMIEVK (188 aa). Active-site residues include Ser-165, His-192, and Asp-289.

This sequence belongs to the CheB family. Post-translationally, phosphorylated by CheA. Phosphorylation of the N-terminal regulatory domain activates the methylesterase activity.

The protein localises to the cytoplasm. The enzyme catalyses [protein]-L-glutamate 5-O-methyl ester + H2O = L-glutamyl-[protein] + methanol + H(+). The catalysed reaction is L-glutaminyl-[protein] + H2O = L-glutamyl-[protein] + NH4(+). Involved in chemotaxis. Part of a chemotaxis signal transduction system that modulates chemotaxis in response to various stimuli. Catalyzes the demethylation of specific methylglutamate residues introduced into the chemoreceptors (methyl-accepting chemotaxis proteins or MCP) by CheR. Also mediates the irreversible deamidation of specific glutamine residues to glutamic acid. The chain is Protein-glutamate methylesterase/protein-glutamine glutaminase from Methanococcoides burtonii (strain DSM 6242 / NBRC 107633 / OCM 468 / ACE-M).